We begin with the raw amino-acid sequence, 498 residues long: Tyrosine 3-monooxygenase (498 aa).

The segment covering methionine 1–glutamine 10 has biased composition (polar residues). Residues methionine 1–arginine 33 form a disordered region. Phosphoserine is present on residues serine 19 and serine 31. A Phosphoserine; by CaMK2 and PKA modification is found at serine 40. The Fe cation site is built by histidine 331, histidine 336, and glutamate 376. The residue at position 472 (serine 472) is a Phosphoserine.

This sequence belongs to the biopterin-dependent aromatic amino acid hydroxylase family. As to quaternary structure, homotetramer. Interacts (when phosphorylated at Ser-19) with YWHAG; one YWHAG dimer bounds to one TH tetramer and this interaction may influence the phosphorylation and dephosphorylation of other sites. Interacts with NT5DC2; the interaction results in reduced phosphorylation and decreased catalytic activity of TH. The cofactor is Fe(2+). In terms of processing, phosphorylated on Ser-19, Ser-31 and Ser-40 by several protein kinases with different site specificities. Phosphorylation at Ser-31 and Ser-40 leads to an increase of TH activity. Phosphorylation at Ser-40 activates the enzyme and also counteracts the feedback inhibition of TH by catecholamines. Phosphorylation of Ser-19 and Ser-31 triggers the proteasomal degradation of TH through the ubiquitin-proteasome pathway. Phosphorylation at Ser-31 facilitates transport of TH from the soma to the nerve terminals via the microtubule network. Phosphorylation at Ser-19 induces the high-affinity binding to the 14-3-3 protein YWHAG; this interaction may influence the phosphorylation and dephosphorylation of other sites. Ser-19 increases the phosphorylation at Ser-40 in a hierarchical manner, leading to increased activity. As to expression, expressed in the adrenal gland. Expressed in the retina. Expressed in the in the striatum (at protein level).

The protein resides in the cytoplasm. The protein localises to the perinuclear region. It is found in the nucleus. Its subcellular location is the cell projection. It localises to the axon. The protein resides in the cytoplasmic vesicle. The protein localises to the secretory vesicle. It is found in the synaptic vesicle. The catalysed reaction is (6R)-L-erythro-5,6,7,8-tetrahydrobiopterin + L-tyrosine + O2 = (4aS,6R)-4a-hydroxy-L-erythro-5,6,7,8-tetrahydrobiopterin + L-dopa. It functions in the pathway catecholamine biosynthesis; dopamine biosynthesis; dopamine from L-tyrosine: step 1/2. Inhibited in feedback fashion by the catecholamine neurotransmitters, especially by dopamine in competition with tetrahydrobiopterin. Phosphorylation of several Ser/Thr residues in the N-terminus regulates the catalytic activity. Ser-31 and Ser-40 are readily phosphorylated to activate the catalytic activity. A Cysteine modification induced by N-ethylmaleimide (NEM), inhibits tyrosine 3-monooxygenase activity through the modification of the Cys-177. Catalyzes the conversion of L-tyrosine to L-dihydroxyphenylalanine (L-Dopa), the rate-limiting step in the biosynthesis of catecholamines, dopamine, noradrenaline, and adrenaline. Uses tetrahydrobiopterin and molecular oxygen to convert tyrosine to L-Dopa. In addition to tyrosine, is able to catalyze the hydroxylation of phenylalanine and tryptophan with lower specificity. Positively regulates the regression of retinal hyaloid vessels during postnatal development. The polypeptide is Tyrosine 3-monooxygenase (Th) (Mus musculus (Mouse)).